Here is a 279-residue protein sequence, read N- to C-terminus: NLP effector protein 9 (279 aa).

A signal peptide spans 1 to 19; sequence MKISNLLGVLVVFLAVVKG. The short motif at 151-161 is the Conserved undecapeptide motif element; it reads AIMYAWYFPDI. The N-linked (GlcNAc...) asparagine glycan is linked to Asn176.

Belongs to the Necrosis inducing protein (NPP1) family.

Its subcellular location is the secreted. Functionally, secreted effector that acts as a pathogen-associated molecular pattern (PAMP) recognized by the plant immune system. Seems not to induce necrosis in Nicotiana benthamiana leaves. This Plasmopara viticola (Downy mildew of grapevine) protein is NLP effector protein 9.